A 490-amino-acid chain; its full sequence is Glutamate--tRNA ligase (490 aa).

The 'HIGH' region signature appears at 12–22; that stretch reads PSPTGTPHVGL. Residues 256 to 260 carry the 'KMSKS' region motif; the sequence is KLSKR. Lys259 provides a ligand contact to ATP.

It belongs to the class-I aminoacyl-tRNA synthetase family. Glutamate--tRNA ligase type 1 subfamily. In terms of assembly, monomer.

The protein resides in the cytoplasm. The enzyme catalyses tRNA(Glu) + L-glutamate + ATP = L-glutamyl-tRNA(Glu) + AMP + diphosphate. Functionally, catalyzes the attachment of glutamate to tRNA(Glu) in a two-step reaction: glutamate is first activated by ATP to form Glu-AMP and then transferred to the acceptor end of tRNA(Glu). In Mycobacterium sp. (strain KMS), this protein is Glutamate--tRNA ligase.